A 166-amino-acid polypeptide reads, in one-letter code: Probable glucosamine 6-phosphate N-acetyltransferase 2 (166 aa).

The N-acetyltransferase domain occupies 21–166; that stretch reads VQIRRLEATD…EKGVQMAIYF (146 aa). Residues S43, 93 to 96, and 105 to 107 each bind substrate; these read KFLR and EDV. 115–120 contacts acetyl-CoA; it reads GRGLGL. 136–137 is a substrate binding site; that stretch reads YK. 150–152 contributes to the acetyl-CoA binding site; that stretch reads YAK.

It belongs to the acetyltransferase family. GNA1 subfamily. As to quaternary structure, homodimer.

Its subcellular location is the endoplasmic reticulum membrane. The catalysed reaction is D-glucosamine 6-phosphate + acetyl-CoA = N-acetyl-D-glucosamine 6-phosphate + CoA + H(+). Its pathway is nucleotide-sugar biosynthesis; UDP-N-acetyl-alpha-D-glucosamine biosynthesis; N-acetyl-alpha-D-glucosamine 1-phosphate from alpha-D-glucosamine 6-phosphate (route I): step 1/2. Functionally, acetyltransferase involved in UDP-N-acetylglucosamine (UDP-GlcNAc) biosynthesis. UDP-GlcNAc is an essential metabolite that serves as an initial sugar donor of N-glycan synthesis and thus plays an important role in protein and lipid glycosylation. This is Probable glucosamine 6-phosphate N-acetyltransferase 2 from Oryza sativa subsp. japonica (Rice).